The primary structure comprises 143 residues: Sporulation-specific cell division protein SsgB (143 aa).

It belongs to the SsgA family. Interacts with SsgA. Interacts with FtsZ (via N-terminus).

Its subcellular location is the cell septum. Involved in sporulation-specific cell division. Required for early stages of sporulation. Important in the process of growth cessation prior to sporulation-specific cell division. Recruits cell division protein FtsZ to the future septum sites and tethers the contractile ring structure (Z ring) to the cytoplasmic membrane during sporulation. Stimulates polymerization and filament length of FtsZ in vitro. This chain is Sporulation-specific cell division protein SsgB, found in Frankia casuarinae (strain DSM 45818 / CECT 9043 / HFP020203 / CcI3).